The primary structure comprises 529 residues: Cytochrome P450 monooxygenase 136 (529 aa).

A helical transmembrane segment spans residues 9–29; it reads SPLALAVLSIATCQLALVWWY. Cysteine 447 contributes to the heme binding site.

Belongs to the cytochrome P450 family. Heme is required as a cofactor.

The protein localises to the membrane. It participates in secondary metabolite biosynthesis. Its function is as follows. Cytochrome P450 monooxygenase that is able to use delta(6)-protoilludene as a substrate to produce delta(6)-protoilludene-5-ol. This chain is Cytochrome P450 monooxygenase 136, found in Postia placenta (strain ATCC 44394 / Madison 698-R) (Brown rot fungus).